A 616-amino-acid polypeptide reads, in one-letter code: Chaperone protein HscA (616 aa).

This sequence belongs to the heat shock protein 70 family.

In terms of biological role, chaperone involved in the maturation of iron-sulfur cluster-containing proteins. Has a low intrinsic ATPase activity which is markedly stimulated by HscB. Involved in the maturation of IscU. This chain is Chaperone protein HscA, found in Shigella flexneri serotype 5b (strain 8401).